The following is a 298-amino-acid chain: Small ribosomal subunit protein uS3 (298 aa).

The region spanning 38–106 (IRRRLSRGME…QVQLNILEVK (69 aa)) is the KH type-2 domain. The tract at residues 212-298 (KQKQQESEVR…EPRADEKTEG (87 aa)) is disordered. Residues 214 to 237 (KQQESEVRPPRGERGERGGRPERG) show a composition bias toward basic and acidic residues. Over residues 265 to 278 (GSAQSPEQAQTSGD) the composition is skewed to polar residues.

The protein belongs to the universal ribosomal protein uS3 family. Part of the 30S ribosomal subunit. Forms a tight complex with proteins S10 and S14.

Functionally, binds the lower part of the 30S subunit head. Binds mRNA in the 70S ribosome, positioning it for translation. The polypeptide is Small ribosomal subunit protein uS3 (Saccharopolyspora erythraea (strain ATCC 11635 / DSM 40517 / JCM 4748 / NBRC 13426 / NCIMB 8594 / NRRL 2338)).